The chain runs to 431 residues: Tyrosine--tRNA ligase (431 aa).

Tyr34 is a binding site for L-tyrosine. Residues 39-48 carry the 'HIGH' region motif; that stretch reads PTADSLHIGH. Positions 171 and 175 each coordinate L-tyrosine. A 'KMSKS' region motif is present at residues 231–235; that stretch reads KFGKT. Residue Lys234 coordinates ATP. Residues 353–422 enclose the S4 RNA-binding domain; the sequence is INAVEALVKT…GKYTILRRGK (70 aa).

This sequence belongs to the class-I aminoacyl-tRNA synthetase family. TyrS type 1 subfamily. Homodimer.

It is found in the cytoplasm. It carries out the reaction tRNA(Tyr) + L-tyrosine + ATP = L-tyrosyl-tRNA(Tyr) + AMP + diphosphate + H(+). Its function is as follows. Catalyzes the attachment of tyrosine to tRNA(Tyr) in a two-step reaction: tyrosine is first activated by ATP to form Tyr-AMP and then transferred to the acceptor end of tRNA(Tyr). In Neisseria gonorrhoeae (strain ATCC 700825 / FA 1090), this protein is Tyrosine--tRNA ligase.